A 224-amino-acid chain; its full sequence is Peroxiredoxin-6 (224 aa).

A Thioredoxin domain is found at 5 to 169 (LLLGDEAPNF…ILRVVDSLQL (165 aa)). A required and sufficient for targeting to lysosomes and lamellar bodies region spans residues 31–40 (DSWGILFSHP). Thr-44 is subject to Phosphothreonine. Cys-47 functions as the Cysteine sulfenic acid (-SOH) intermediate; for peroxidase activity in the catalytic mechanism. Position 63 is an N6-acetyllysine (Lys-63). A Phosphotyrosine modification is found at Tyr-89. The residue at position 93 (Thr-93) is a Phosphothreonine. The For phospholipase activity role is filled by Asp-140. Residue Thr-177 is modified to Phosphothreonine; by MAPK. Lys-209 carries the N6-acetyllysine; alternate modification. Lys-209 is modified (N6-succinyllysine; alternate).

The protein belongs to the peroxiredoxin family. Prx6 subfamily. Homodimer. Interacts with GSTP1; mediates PRDX6 glutathionylation and regeneration. Interacts with APEX1. Interacts with STH. May interact with FAM168B. May interact with HTR2A. Irreversibly inactivated by overoxidation of Cys-47 to sulfinic acid (Cys-SO(2)H) and sulfonic acid (Cys-SO(3)H) forms upon oxidative stress. In terms of processing, phosphorylation at Thr-177 by MAP kinases increases the phospholipase activity of the enzyme. The phosphorylated form exhibits a greater lysophosphatidylcholine acyltransferase activity compared to the non-phosphorylated form. In terms of tissue distribution, highly expressed in heart, kidney and liver. Moderate expression in brain and stomach. Very low levels in intestine.

The protein resides in the cytoplasm. It is found in the lysosome. The enzyme catalyses a hydroperoxide + 2 glutathione = an alcohol + glutathione disulfide + H2O. The catalysed reaction is a 1,2-diacyl-sn-glycero-3-phosphocholine + H2O = a 1-acyl-sn-glycero-3-phosphocholine + a fatty acid + H(+). It carries out the reaction a 1-acyl-sn-glycero-3-phosphocholine + an acyl-CoA = a 1,2-diacyl-sn-glycero-3-phosphocholine + CoA. It catalyses the reaction 1-hexadecanoyl-sn-glycero-3-phosphocholine + hexadecanoyl-CoA = 1,2-dihexadecanoyl-sn-glycero-3-phosphocholine + CoA. The enzyme catalyses 1,2-dihexadecanoyl-sn-glycero-3-phosphocholine + H2O = 1-hexadecanoyl-sn-glycero-3-phosphocholine + hexadecanoate + H(+). MJ33 or lithium;[(2R)-1-hexadecoxy-3-(2,2,2-trifluoroethoxy)propan-2-yl] methyl phosphate inhibits its phospholipase A2 activity. CI-976 or 2,2-Dimethyl-N-(2,4,6-trimethoxyphenyl)dodecanamide inhibits its lysophosphatidylcholine acyltransferase activity. Its function is as follows. Thiol-specific peroxidase that catalyzes the reduction of hydrogen peroxide and organic hydroperoxides to water and alcohols, respectively. Can reduce H(2)O(2) and short chain organic, fatty acid, and phospholipid hydroperoxides. Has phospholipase activity. Can either reduce the oxidized sn-2 fatty acyl group of phospholipids (peroxidase activity) or hydrolyze the sn-2 ester bond of phospholipids (phospholipase activity). These activities are dependent on binding to phospholipids at acidic pH and to oxidized phospholipds at cytosolic pH. Plays a role in cell protection against oxidative stress by detoxifying peroxides and in phospholipid homeostasis. Exhibits acyl-CoA-dependent lysophospholipid acyltransferase which mediates the conversion of lysophosphatidylcholine (1-acyl-sn-glycero-3-phosphocholine or LPC) into phosphatidylcholine (1,2-diacyl-sn-glycero-3-phosphocholine or PC). Shows a clear preference for LPC as the lysophospholipid and for palmitoyl CoA as the fatty acyl substrate. In Mus musculus (Mouse), this protein is Peroxiredoxin-6 (Prdx6).